Consider the following 394-residue polypeptide: Phosphopentomutase (394 aa).

Residues D15, D288, H293, D329, H330, and H341 each contribute to the Mn(2+) site.

The protein belongs to the phosphopentomutase family. The cofactor is Mn(2+).

Its subcellular location is the cytoplasm. It catalyses the reaction 2-deoxy-alpha-D-ribose 1-phosphate = 2-deoxy-D-ribose 5-phosphate. The enzyme catalyses alpha-D-ribose 1-phosphate = D-ribose 5-phosphate. It functions in the pathway carbohydrate degradation; 2-deoxy-D-ribose 1-phosphate degradation; D-glyceraldehyde 3-phosphate and acetaldehyde from 2-deoxy-alpha-D-ribose 1-phosphate: step 1/2. Functionally, isomerase that catalyzes the conversion of deoxy-ribose 1-phosphate (dRib-1-P) and ribose 1-phosphate (Rib-1-P) to deoxy-ribose 5-phosphate (dRib-5-P) and ribose 5-phosphate (Rib-5-P), respectively. In Bacillus licheniformis (strain ATCC 14580 / DSM 13 / JCM 2505 / CCUG 7422 / NBRC 12200 / NCIMB 9375 / NCTC 10341 / NRRL NRS-1264 / Gibson 46), this protein is Phosphopentomutase.